The following is a 74-amino-acid chain: Protein kish-B (74 aa).

The N-terminal stretch at 1–22 (MTNVYSLDGILVFGLLFVCTCA) is a signal peptide. The Extracellular segment spans residues 23–52 (YFKKVPRLKTWLLSEKKGVWGVFYKAAVIG). The helical transmembrane segment at 53–73 (TRLHAAVAIACIVMAFYVLFI) threads the bilayer. A topological domain (cytoplasmic) is located at residue Lys-74.

It belongs to the KISH family.

The protein localises to the golgi apparatus membrane. In terms of biological role, involved in the early part of the secretory pathway. The polypeptide is Protein kish-B (TMEM167B) (Bos taurus (Bovine)).